Here is a 572-residue protein sequence, read N- to C-terminus: Protein misato homolog 1 (572 aa).

Belongs to the misato family.

It is found in the mitochondrion outer membrane. The protein localises to the cytoplasm. Functionally, involved in the regulation of mitochondrial distribution and morphology. Required for mitochondrial fusion and mitochondrial network formation. This Bos taurus (Bovine) protein is Protein misato homolog 1 (MSTO1).